The sequence spans 389 residues: Lipid-A-disaccharide synthase (389 aa).

Belongs to the LpxB family.

The enzyme catalyses a lipid X + a UDP-2-N,3-O-bis[(3R)-3-hydroxyacyl]-alpha-D-glucosamine = a lipid A disaccharide + UDP + H(+). Its pathway is bacterial outer membrane biogenesis; LPS lipid A biosynthesis. Condensation of UDP-2,3-diacylglucosamine and 2,3-diacylglucosamine-1-phosphate to form lipid A disaccharide, a precursor of lipid A, a phosphorylated glycolipid that anchors the lipopolysaccharide to the outer membrane of the cell. The protein is Lipid-A-disaccharide synthase of Burkholderia multivorans (strain ATCC 17616 / 249).